Reading from the N-terminus, the 201-residue chain is FMN-dependent NADH:quinone oxidoreductase (201 aa).

FMN is bound by residues Ser-10, 16 to 18 (SQS), 96 to 99 (MYNF), and 140 to 143 (SRGG).

It belongs to the azoreductase type 1 family. In terms of assembly, homodimer. The cofactor is FMN.

It catalyses the reaction 2 a quinone + NADH + H(+) = 2 a 1,4-benzosemiquinone + NAD(+). The catalysed reaction is N,N-dimethyl-1,4-phenylenediamine + anthranilate + 2 NAD(+) = 2-(4-dimethylaminophenyl)diazenylbenzoate + 2 NADH + 2 H(+). Quinone reductase that provides resistance to thiol-specific stress caused by electrophilic quinones. Functionally, also exhibits azoreductase activity. Catalyzes the reductive cleavage of the azo bond in aromatic azo compounds to the corresponding amines. This is FMN-dependent NADH:quinone oxidoreductase from Salmonella paratyphi A (strain ATCC 9150 / SARB42).